Reading from the N-terminus, the 260-residue chain is uncharacterized protein (260 aa).

This sequence belongs to the methyltransferase superfamily.

It localises to the cytoplasm. It is found in the nucleus. Probable methyltransferase. This is an uncharacterized protein from Schizosaccharomyces pombe (strain 972 / ATCC 24843) (Fission yeast).